A 460-amino-acid polypeptide reads, in one-letter code: tRNA modification GTPase MnmE (460 aa).

(6S)-5-formyl-5,6,7,8-tetrahydrofolate is bound by residues arginine 29, glutamate 91, and lysine 132. A TrmE-type G domain is found at 227–383 (GISIALIGKT…LIDTIIKKCG (157 aa)). Residue asparagine 237 participates in K(+) binding. GTP is bound by residues 237-242 (NVGKSS), 256-262 (TNIPGTT), and 281-284 (DTAG). Serine 241 lines the Mg(2+) pocket. The K(+) site is built by threonine 256, isoleucine 258, and threonine 261. Threonine 262 provides a ligand contact to Mg(2+). (6S)-5-formyl-5,6,7,8-tetrahydrofolate is bound at residue lysine 460.

The protein belongs to the TRAFAC class TrmE-Era-EngA-EngB-Septin-like GTPase superfamily. TrmE GTPase family. In terms of assembly, homodimer. Heterotetramer of two MnmE and two MnmG subunits. K(+) is required as a cofactor.

It localises to the cytoplasm. In terms of biological role, exhibits a very high intrinsic GTPase hydrolysis rate. Involved in the addition of a carboxymethylaminomethyl (cmnm) group at the wobble position (U34) of certain tRNAs, forming tRNA-cmnm(5)s(2)U34. This is tRNA modification GTPase MnmE from Prochlorococcus marinus (strain AS9601).